The primary structure comprises 572 residues: Bilirubin oxidase (572 aa).

The first 19 residues, 1-19 (MFKHTLGAAALSLLFNSNA), serve as a signal peptide directing secretion. The propeptide occupies 20 to 38 (VQASPVPETSPATGHLFKR). Plastocyanin-like domains follow at residues 98–194 (VGYD…YMLT) and 404–526 (VAFA…VFVD). Positions 132, 134, 172, 174, 436, 439, 441, 494, 495, 496, 500, and 505 each coordinate Cu cation. Asparagine 510 and asparagine 520 each carry an N-linked (GlcNAc...) asparagine glycan.

Belongs to the multicopper oxidase family. Cu cation is required as a cofactor.

It carries out the reaction 2 (4Z,15Z)-bilirubin IXalpha + O2 = 2 biliverdin IXalpha + 2 H2O. Oxidation of bilirubin and other tetrapyrroles. The chain is Bilirubin oxidase from Albifimbria verrucaria (Myrothecium leaf spot and pod blight fungus).